Here is a 278-residue protein sequence, read N- to C-terminus: Tryptophan synthase alpha chain (278 aa).

Catalysis depends on proton acceptor residues glutamate 50 and aspartate 61.

Belongs to the TrpA family. In terms of assembly, tetramer of two alpha and two beta chains.

The catalysed reaction is (1S,2R)-1-C-(indol-3-yl)glycerol 3-phosphate + L-serine = D-glyceraldehyde 3-phosphate + L-tryptophan + H2O. Its pathway is amino-acid biosynthesis; L-tryptophan biosynthesis; L-tryptophan from chorismate: step 5/5. The alpha subunit is responsible for the aldol cleavage of indoleglycerol phosphate to indole and glyceraldehyde 3-phosphate. The sequence is that of Tryptophan synthase alpha chain from Rhodopseudomonas palustris (strain ATCC BAA-98 / CGA009).